Here is a 177-residue protein sequence, read N- to C-terminus: Retrograde regulation protein 1 (177 aa).

Positions 1-24 are disordered; that stretch reads MSSIPAGTDPGSCGANFKNDRKRR. A bHLH domain is found at 11-96; it reads GSCGANFKND…TQAVEYISHL (86 aa). Phosphoserine occurs at positions 50 and 52. 2 disordered regions span residues 52–82 and 147–177; these read SNDTLSESTPGALGLSSKAKGTGTKDGKPNK and LAATNDDSVRPPAKRLSSFEYGGYGEYGNGS. A Phosphothreonine modification is found at Thr60. The span at 168–177 shows a compositional bias: gly residues; it reads GGYGEYGNGS.

In terms of assembly, binds DNA as a heterodimer with RTG3.

It is found in the nucleus. Functionally, required for a novel path of interorganelle communication between mitochondria, peroxisomes and the nucleus, thereby maintaining a functional metabolic interaction between the tricarboxylic acid and glyoxylate cycles. Transcription factor that regulates CIT2 gene expression. Binds to two identical sites oriented as inverted repeats 28 bp apart in a regulatory upstream activation sequence element (UASR) in the CIT2 promoter. The core binding site is 5'-GGTCAC-3'. This is Retrograde regulation protein 1 (RTG1) from Saccharomyces cerevisiae (strain ATCC 204508 / S288c) (Baker's yeast).